The chain runs to 472 residues: Homeobox protein PKNOX2 (472 aa).

The segment at 1–62 is disordered; the sequence is MMQHASPAPA…STPVPSAPID (62 aa). The span at 26–38 shows a compositional bias: polar residues; sequence DSPQMTATTQPPS. Positions 46–56 are enriched in low complexity; sequence SAPSAAASTPV. The 84-residue stretch at 96–179 folds into the MEIS N-terminal domain; that stretch reads GSECITSASF…MHSDNLLRND (84 aa). A DNA-binding region (homeobox) is located at residues 291 to 350; it reads KRGVLPKHATNIMRSWLFQHLMHPYPTEDEKRQIAAQTNLTLLQVNNWFVNARRRILQPM. Disordered regions lie at residues 351 to 371, 386 to 405, and 423 to 472; these read LDAS…QHRP, QQQG…LDNL, and AAHD…DSLV. The segment covering 361–371 has biased composition (basic residues); sequence KAKKIKSQHRP. The segment covering 396 to 405 has biased composition (polar residues); it reads PDGSINLDNL. A compositionally biased stretch (acidic residues) spans 429–454; the sequence is LDGTEEEDEDEMEEEEEEELEEEVDE.

It belongs to the TALE/MEIS homeobox family.

The protein resides in the nucleus. This is Homeobox protein PKNOX2 (PKNOX2) from Pongo abelii (Sumatran orangutan).